The chain runs to 455 residues: tRNA modification GTPase MnmE (455 aa).

Residues arginine 23, glutamate 85, and arginine 124 each coordinate (6S)-5-formyl-5,6,7,8-tetrahydrofolate. One can recognise a TrmE-type G domain in the interval 220 to 375 (GVSVVIAGKP…LQDAIFEAFI (156 aa)). Asparagine 230 provides a ligand contact to K(+). Residues 230 to 235 (NVGKSS), 249 to 255 (TSVPGTT), and 274 to 277 (DTAG) each bind GTP. Residue serine 234 coordinates Mg(2+). Positions 249, 251, and 254 each coordinate K(+). Residue threonine 255 coordinates Mg(2+). A (6S)-5-formyl-5,6,7,8-tetrahydrofolate-binding site is contributed by lysine 455.

The protein belongs to the TRAFAC class TrmE-Era-EngA-EngB-Septin-like GTPase superfamily. TrmE GTPase family. In terms of assembly, homodimer. Heterotetramer of two MnmE and two MnmG subunits. The cofactor is K(+).

It localises to the cytoplasm. Exhibits a very high intrinsic GTPase hydrolysis rate. Involved in the addition of a carboxymethylaminomethyl (cmnm) group at the wobble position (U34) of certain tRNAs, forming tRNA-cmnm(5)s(2)U34. This chain is tRNA modification GTPase MnmE, found in Geotalea uraniireducens (strain Rf4) (Geobacter uraniireducens).